Here is a 75-residue protein sequence, read N- to C-terminus: Penaeidin-3n (75 aa).

A signal peptide spans 1–19; the sequence is MRLVVCLVFLASFALVCQG. A Pyrrolidone carboxylic acid modification is found at Gln20. 2 cysteine pairs are disulfide-bonded: Cys44–Cys59 and Cys48–Cys66. Position 74 is a serine amide (Ser74).

The protein belongs to the penaeidin family.

It is found in the cytoplasmic granule. Antibacterial and antifungal activity. Presents chitin-binding activity. The chain is Penaeidin-3n from Penaeus setiferus (Atlantic white shrimp).